The chain runs to 689 residues: Glycine--tRNA ligase beta subunit (689 aa).

This sequence belongs to the class-II aminoacyl-tRNA synthetase family. Tetramer of two alpha and two beta subunits.

Its subcellular location is the cytoplasm. It catalyses the reaction tRNA(Gly) + glycine + ATP = glycyl-tRNA(Gly) + AMP + diphosphate. The chain is Glycine--tRNA ligase beta subunit from Yersinia enterocolitica serotype O:8 / biotype 1B (strain NCTC 13174 / 8081).